A 671-amino-acid polypeptide reads, in one-letter code: Probable boron transporter 6 (671 aa).

Topologically, residues 1-37 (MKSEGESGPFQGILRDIEGRRKCYKQDWIRGIKTGIR) are cytoplasmic. Residues 38–58 (ILAPTCYIFFASSLPVVAFGE) traverse the membrane as a helical segment. Over 59-77 (QLSKHTGGALSAVETLAST) the chain is Extracellular. Residues 78–98 (SICGIIHAIFGGQPLLIVGVA) form a helical membrane-spanning segment. Over 99–123 (EPTIIMYTYLYSFCISRPDIGRELY) the chain is Cytoplasmic. Residues 124 to 144 (LAWVAWVCVWTSVLLILLSIF) form a helical membrane-spanning segment. Residues 145 to 157 (NAGTIITRFTRIA) lie on the Extracellular side of the membrane. The chain crosses the membrane as a helical span at residues 158–178 (GELFGMLIAVLFLQEAIKGLI). At 179–195 (SEFHAPEIKNQETGKSH) the chain is on the cytoplasmic side. The helical transmembrane segment at 196 to 216 (FLLIYANGLLAVIFSLGLLIT) threads the bilayer. Residues 217 to 235 (ALKSRRAKSWKYGFGWLRS) lie on the Extracellular side of the membrane. Residues 236–256 (FIGDYGVPLMVLLWTALSYTV) form a helical membrane-spanning segment. At 257 to 291 (PSEVLPSVPRRLFCPLPWEPASLYHWTVVKDMGKV) the chain is on the cytoplasmic side. A helical membrane pass occupies residues 292-312 (PIMYILAAFIPGVMIAGLYFF). Topologically, residues 313–332 (DHSVASQMAQQKEFNLKNPS) are extracellular. Residues 333 to 353 (AYHYDIFLLGIITLICGLLGL) form a helical membrane-spanning segment. Topologically, residues 354–469 (PPSNGVLPQA…EQRVSNLLQS (116 aa)) are cytoplasmic. The helical transmembrane segment at 470–490 (VLVGLTLLAVTVIKMIPSSVL) threads the bilayer. Topologically, residues 491 to 557 (WGYFAYMAID…QLVYFLLCYG (67 aa)) are extracellular. Residues 558–578 (MTWIPMAGIFFPALFFLLISI) traverse the membrane as a helical segment. Over 579–671 (REHLLPKLFD…EEKHVTFEPH (93 aa)) the chain is Cytoplasmic.

It belongs to the anion exchanger (TC 2.A.31.3) family.

It localises to the membrane. Its function is as follows. Probable boron transporter. Boron is essential for maintaining the integrity of plants cell walls. The sequence is that of Probable boron transporter 6 (BOR6) from Arabidopsis thaliana (Mouse-ear cress).